The chain runs to 393 residues: 5-amino-6-(D-ribitylamino)uracil--L-tyrosine 4-hydroxyphenyl transferase (393 aa).

The region spanning 67–322 is the Radical SAM core domain; that stretch reads VTYVINRNIN…GQWIVNHQPS (256 aa). Residues Cys81, Cys85, and Cys88 each coordinate [4Fe-4S] cluster.

It belongs to the radical SAM superfamily. CofH family. As to quaternary structure, consists of two subunits, CofG and CofH. [4Fe-4S] cluster is required as a cofactor.

The enzyme catalyses 5-amino-6-(D-ribitylamino)uracil + L-tyrosine + S-adenosyl-L-methionine = 5-amino-5-(4-hydroxybenzyl)-6-(D-ribitylimino)-5,6-dihydrouracil + 2-iminoacetate + 5'-deoxyadenosine + L-methionine + H(+). Its pathway is cofactor biosynthesis; coenzyme F0 biosynthesis. Functionally, catalyzes the radical-mediated synthesis of 5-amino-5-(4-hydroxybenzyl)-6-(D-ribitylimino)-5,6-dihydrouracil from 5-amino-6-(D-ribitylamino)uracil and L-tyrosine. The sequence is that of 5-amino-6-(D-ribitylamino)uracil--L-tyrosine 4-hydroxyphenyl transferase from Thermosynechococcus vestitus (strain NIES-2133 / IAM M-273 / BP-1).